We begin with the raw amino-acid sequence, 571 residues long: Urease subunit alpha (571 aa).

The region spanning 133-571 is the Urease domain; sequence GGIDTHVHFI…LPLAQRYFLF (439 aa). Ni(2+) is bound by residues His138, His140, and Lys221. Lys221 is subject to N6-carboxylysine. His223 is a substrate binding site. The Ni(2+) site is built by His250 and His276. The active-site Proton donor is the His324. Position 364 (Asp364) interacts with Ni(2+).

The protein belongs to the metallo-dependent hydrolases superfamily. Urease alpha subunit family. In terms of assembly, heterotrimer of UreA (gamma), UreB (beta) and UreC (alpha) subunits. Three heterotrimers associate to form the active enzyme. Ni cation serves as cofactor. Carboxylation allows a single lysine to coordinate two nickel ions.

It localises to the cytoplasm. It catalyses the reaction urea + 2 H2O + H(+) = hydrogencarbonate + 2 NH4(+). It functions in the pathway nitrogen metabolism; urea degradation; CO(2) and NH(3) from urea (urease route): step 1/1. This chain is Urease subunit alpha, found in Staphylococcus carnosus (strain TM300).